The following is a 212-amino-acid chain: uncharacterized protein (212 aa).

Over residues 87-105 the composition is skewed to low complexity; that stretch reads NNNNNNNNNNNHNHNNSNN. Residues 87–107 are disordered; that stretch reads NNNNNNNNNNNHNHNNSNNTA.

This is an uncharacterized protein from Saccharomyces cerevisiae (strain ATCC 204508 / S288c) (Baker's yeast).